The following is a 537-amino-acid chain: Pentatricopeptide repeat-containing protein At4g32450, mitochondrial (537 aa).

Residues 1–110 (MIYTLTRGSL…EHSEIINQRN (110 aa)) constitute a mitochondrion transit peptide. The span at 113–140 (WQSSDGCSSYGTTGNGVPQENNTGGNHF) shows a compositional bias: polar residues. A disordered region spans residues 113 to 148 (WQSSDGCSSYGTTGNGVPQENNTGGNHFQQDHSGHS). PPR repeat units lie at residues 145 to 179 (SGHS…GYVV), 180 to 210 (DLPR…ITSS), 215 to 249 (DISA…NLET), 250 to 280 (WCGV…GNKP), 281 to 316 (DGEM…GIIP), and 317 to 347 (CMEH…MEPN). Residues 412–442 (YGIRYMAAGDISRPENRELYMALKSLKEHMI) are type E(+) motif. The interval 443 to 537 (EIGYVPLSKL…DGVCSCREYW (95 aa)) is type DYW motif.

It belongs to the PPR family. PCMP-H subfamily.

Its subcellular location is the mitochondrion. This Arabidopsis thaliana (Mouse-ear cress) protein is Pentatricopeptide repeat-containing protein At4g32450, mitochondrial (PCMP-H63).